Consider the following 221-residue polypeptide: Adenylate kinase (221 aa).

Residue 10–15 (GAGKGT) participates in ATP binding. Residues 30-59 (STGDMLRAAVKAGTPLGLEAKRFMDAGELV) form an NMP region. AMP is bound by residues Thr-31, Arg-36, 57 to 59 (ELV), 85 to 88 (GFPR), and Gln-92. Positions 122–159 (GRRSHAASGRTYHVKFNPPKVEGVDDMTGEPLIQRDDD) are LID. ATP-binding positions include Arg-123 and 132-133 (TY). AMP-binding residues include Arg-156 and Arg-167. Gly-207 contributes to the ATP binding site.

It belongs to the adenylate kinase family. In terms of assembly, monomer.

Its subcellular location is the cytoplasm. The enzyme catalyses AMP + ATP = 2 ADP. It participates in purine metabolism; AMP biosynthesis via salvage pathway; AMP from ADP: step 1/1. In terms of biological role, catalyzes the reversible transfer of the terminal phosphate group between ATP and AMP. Plays an important role in cellular energy homeostasis and in adenine nucleotide metabolism. The protein is Adenylate kinase of Paraburkholderia phytofirmans (strain DSM 17436 / LMG 22146 / PsJN) (Burkholderia phytofirmans).